We begin with the raw amino-acid sequence, 282 residues long: Shikimate dehydrogenase (NADP(+)) (282 aa).

Shikimate contacts are provided by residues 18–20 (SRS) and Thr65. Catalysis depends on Lys69, which acts as the Proton acceptor. Glu81 is an NADP(+) binding site. Shikimate contacts are provided by Asn90 and Asp105. Residues 130–134 (GAGGA), 154–159 (NRTPAR), and Met222 contribute to the NADP(+) site. Position 224 (Tyr224) interacts with shikimate. Gly245 lines the NADP(+) pocket.

The protein belongs to the shikimate dehydrogenase family. In terms of assembly, homodimer.

The catalysed reaction is shikimate + NADP(+) = 3-dehydroshikimate + NADPH + H(+). The protein operates within metabolic intermediate biosynthesis; chorismate biosynthesis; chorismate from D-erythrose 4-phosphate and phosphoenolpyruvate: step 4/7. In terms of biological role, involved in the biosynthesis of the chorismate, which leads to the biosynthesis of aromatic amino acids. Catalyzes the reversible NADPH linked reduction of 3-dehydroshikimate (DHSA) to yield shikimate (SA). This chain is Shikimate dehydrogenase (NADP(+)), found in Acidovorax ebreus (strain TPSY) (Diaphorobacter sp. (strain TPSY)).